Here is a 312-residue protein sequence, read N- to C-terminus: Acetyl-coenzyme A carboxylase carboxyl transferase subunit beta (312 aa).

Residues 24–293 enclose the CoA carboxyltransferase N-terminal domain; it reads LWIKCPDSGQ…PHADEVAAPP (270 aa). The tract at residues 286–312 is disordered; that stretch reads ADEVAAPPPPDVEGPPPAAEPVALPPA. A compositionally biased stretch (pro residues) spans 291 to 312; it reads APPPPDVEGPPPAAEPVALPPA.

Belongs to the AccD/PCCB family. In terms of assembly, acetyl-CoA carboxylase is a heterohexamer composed of biotin carboxyl carrier protein (AccB), biotin carboxylase (AccC) and two subunits each of ACCase subunit alpha (AccA) and ACCase subunit beta (AccD).

The protein resides in the cytoplasm. The catalysed reaction is N(6)-carboxybiotinyl-L-lysyl-[protein] + acetyl-CoA = N(6)-biotinyl-L-lysyl-[protein] + malonyl-CoA. The protein operates within lipid metabolism; malonyl-CoA biosynthesis; malonyl-CoA from acetyl-CoA: step 1/1. In terms of biological role, component of the acetyl coenzyme A carboxylase (ACC) complex. Biotin carboxylase (BC) catalyzes the carboxylation of biotin on its carrier protein (BCCP) and then the CO(2) group is transferred by the transcarboxylase to acetyl-CoA to form malonyl-CoA. The protein is Acetyl-coenzyme A carboxylase carboxyl transferase subunit beta of Afipia carboxidovorans (strain ATCC 49405 / DSM 1227 / KCTC 32145 / OM5) (Oligotropha carboxidovorans).